The primary structure comprises 219 residues: Uracil-DNA glycosylase (219 aa).

Catalysis depends on aspartate 59, which acts as the Proton acceptor.

The protein belongs to the uracil-DNA glycosylase (UDG) superfamily. UNG family.

It is found in the cytoplasm. The catalysed reaction is Hydrolyzes single-stranded DNA or mismatched double-stranded DNA and polynucleotides, releasing free uracil.. Functionally, excises uracil residues from the DNA which can arise as a result of misincorporation of dUMP residues by DNA polymerase or due to deamination of cytosine. The sequence is that of Uracil-DNA glycosylase from Macrococcus caseolyticus (strain JCSC5402) (Macrococcoides caseolyticum).